Here is a 257-residue protein sequence, read N- to C-terminus: Phosphate import ATP-binding protein PstB (257 aa).

Residues 11 to 252 (IQVRDLNFYY…PAKKQTEDYI (242 aa)) enclose the ABC transporter domain. 43–50 (GPSGCGKS) is an ATP binding site.

Belongs to the ABC transporter superfamily. Phosphate importer (TC 3.A.1.7) family. As to quaternary structure, the complex is composed of two ATP-binding proteins (PstB), two transmembrane proteins (PstC and PstA) and a solute-binding protein (PstS).

The protein resides in the cell inner membrane. The catalysed reaction is phosphate(out) + ATP + H2O = ADP + 2 phosphate(in) + H(+). Functionally, part of the ABC transporter complex PstSACB involved in phosphate import. Responsible for energy coupling to the transport system. This is Phosphate import ATP-binding protein PstB from Enterobacter cloacae.